Reading from the N-terminus, the 195-residue chain is Large ribosomal subunit protein uL5 (195 aa).

Belongs to the universal ribosomal protein uL5 family. In terms of assembly, part of the 50S ribosomal subunit; part of the 5S rRNA/L5/L18/L25 subcomplex. Contacts the 5S rRNA and the P site tRNA. Forms a bridge to the 30S subunit in the 70S ribosome.

This is one of the proteins that bind and probably mediate the attachment of the 5S RNA into the large ribosomal subunit, where it forms part of the central protuberance. In the 70S ribosome it contacts protein S13 of the 30S subunit (bridge B1b), connecting the 2 subunits; this bridge is implicated in subunit movement. Contacts the P site tRNA; the 5S rRNA and some of its associated proteins might help stabilize positioning of ribosome-bound tRNAs. The polypeptide is Large ribosomal subunit protein uL5 (Chlorobium chlorochromatii (strain CaD3)).